The sequence spans 144 residues: Large ribosomal subunit protein uL11 (144 aa).

It belongs to the universal ribosomal protein uL11 family. Part of the ribosomal stalk of the 50S ribosomal subunit. Interacts with L10 and the large rRNA to form the base of the stalk. L10 forms an elongated spine to which L12 dimers bind in a sequential fashion forming a multimeric L10(L12)X complex. In terms of processing, one or more lysine residues are methylated.

Forms part of the ribosomal stalk which helps the ribosome interact with GTP-bound translation factors. The protein is Large ribosomal subunit protein uL11 of Francisella tularensis subsp. holarctica (strain OSU18).